A 210-amino-acid chain; its full sequence is FMN-dependent NADH:quinone oxidoreductase (210 aa).

FMN-binding positions include Ser10 and 16–18 (SRS).

The protein belongs to the azoreductase type 1 family. As to quaternary structure, homodimer. Requires FMN as cofactor.

The catalysed reaction is 2 a quinone + NADH + H(+) = 2 a 1,4-benzosemiquinone + NAD(+). The enzyme catalyses N,N-dimethyl-1,4-phenylenediamine + anthranilate + 2 NAD(+) = 2-(4-dimethylaminophenyl)diazenylbenzoate + 2 NADH + 2 H(+). Its function is as follows. Quinone reductase that provides resistance to thiol-specific stress caused by electrophilic quinones. In terms of biological role, also exhibits azoreductase activity. Catalyzes the reductive cleavage of the azo bond in aromatic azo compounds to the corresponding amines. This chain is FMN-dependent NADH:quinone oxidoreductase, found in Kineococcus radiotolerans (strain ATCC BAA-149 / DSM 14245 / SRS30216).